The sequence spans 430 residues: Trigger factor (430 aa).

Positions 163–248 (GNIAIIDFKG…VKEIKVKEIP (86 aa)) constitute a PPIase FKBP-type domain.

Belongs to the FKBP-type PPIase family. Tig subfamily.

It localises to the cytoplasm. It catalyses the reaction [protein]-peptidylproline (omega=180) = [protein]-peptidylproline (omega=0). Its function is as follows. Involved in protein export. Acts as a chaperone by maintaining the newly synthesized protein in an open conformation. Functions as a peptidyl-prolyl cis-trans isomerase. This Clostridium kluyveri (strain NBRC 12016) protein is Trigger factor.